A 207-amino-acid polypeptide reads, in one-letter code: Pyridoxal 5'-phosphate synthase subunit PdxT (207 aa).

Residue G53 to S55 coordinates L-glutamine. C85 (nucleophile) is an active-site residue. L-glutamine is bound by residues R114 and I143 to R144. Active-site charge relay system residues include H184 and E186.

The protein belongs to the glutaminase PdxT/SNO family. As to quaternary structure, in the presence of PdxS, forms a dodecamer of heterodimers. Only shows activity in the heterodimer.

It carries out the reaction aldehydo-D-ribose 5-phosphate + D-glyceraldehyde 3-phosphate + L-glutamine = pyridoxal 5'-phosphate + L-glutamate + phosphate + 3 H2O + H(+). The enzyme catalyses L-glutamine + H2O = L-glutamate + NH4(+). The protein operates within cofactor biosynthesis; pyridoxal 5'-phosphate biosynthesis. Catalyzes the hydrolysis of glutamine to glutamate and ammonia as part of the biosynthesis of pyridoxal 5'-phosphate. The resulting ammonia molecule is channeled to the active site of PdxS. This is Pyridoxal 5'-phosphate synthase subunit PdxT from Acidothermus cellulolyticus (strain ATCC 43068 / DSM 8971 / 11B).